We begin with the raw amino-acid sequence, 295 residues long: 4-hydroxy-tetrahydrodipicolinate synthase (295 aa).

Position 47 (T47) interacts with pyruvate. Catalysis depends on Y135, which acts as the Proton donor/acceptor. K163 serves as the catalytic Schiff-base intermediate with substrate. I206 provides a ligand contact to pyruvate.

The protein belongs to the DapA family. In terms of assembly, homodimer.

It is found in the cytoplasm. The catalysed reaction is L-aspartate 4-semialdehyde + pyruvate = (2S,4S)-4-hydroxy-2,3,4,5-tetrahydrodipicolinate + H2O + H(+). The protein operates within amino-acid biosynthesis; L-lysine biosynthesis via DAP pathway; (S)-tetrahydrodipicolinate from L-aspartate: step 3/4. Is not feedback inhibited by lysine. In terms of biological role, catalyzes the condensation of (S)-aspartate-beta-semialdehyde [(S)-ASA] and pyruvate to 4-hydroxy-tetrahydrodipicolinate (HTPA). The polypeptide is 4-hydroxy-tetrahydrodipicolinate synthase (Staphylococcus aureus (strain COL)).